The sequence spans 101 residues: Urease subunit beta (101 aa).

Belongs to the urease beta subunit family. Heterotrimer of UreA (gamma), UreB (beta) and UreC (alpha) subunits. Three heterotrimers associate to form the active enzyme.

The protein resides in the cytoplasm. The catalysed reaction is urea + 2 H2O + H(+) = hydrogencarbonate + 2 NH4(+). It functions in the pathway nitrogen metabolism; urea degradation; CO(2) and NH(3) from urea (urease route): step 1/1. The sequence is that of Urease subunit beta from Acaryochloris marina (strain MBIC 11017).